The sequence spans 144 residues: Hexon-interlacing protein (144 aa).

Positions 106–133 (LTVMLAKLETLTAQLEELSQKVEELADA) form a coiled coil.

This sequence belongs to the adenoviridae hexon-interlacing protein family. In terms of assembly, homotrimer. Interacts with hexon protein; this interaction tethers the hexons together. Self-interacts with adjacent proteins. Interacts with kinesin light chain KLC1; this interaction leads to capsid disruption at the nuclear pore complex during virus entry into host cell.

The protein localises to the virion. It localises to the host nucleus. Its function is as follows. Structural component of the virion that acts as a cement protein on the capsid exterior and forms triskelion structures consisting of three molecules that stabilize three hexon trimers at the center of each icosahedral facet and fixes the peripentonal hexons. Dispensable for assembly. During virus entry, recruits the anterograde motor kinesin-1 to the capsid docked at the nuclear pore complex thereby subjecting the docked capsid to a pulling force. The resulting tension leads to capsid disruption, dispersion of capsid fragments toward cell periphery and eventually viral DNA entry into the host nucleus. The sequence is that of Hexon-interlacing protein from Homo sapiens (Human).